The sequence spans 216 residues: Co-chaperone protein SBA1 (216 aa).

Serine 2 is modified (N-acetylserine). A CS domain is found at 5-108 (VINPQVAWAQ…LESEYWPRLT (104 aa)). Repeats lie at residues 141–156 (AQGM…AGGA) and 160–174 (GGMD…AGGA). The interval 169 to 216 (GGAGGAGSPDMAQLQQLLAQSGGNLDMGDFKENDEEDEEEEIEPEVKA) is disordered. Positions 200-216 (ENDEEDEEEEIEPEVKA) are enriched in acidic residues.

The protein belongs to the p23/wos2 family. As to quaternary structure, interacts with HSP82.

Functionally, acts as a co-chaperone. In Saccharomyces cerevisiae (strain ATCC 204508 / S288c) (Baker's yeast), this protein is Co-chaperone protein SBA1 (SBA1).